The primary structure comprises 83 residues: Translation initiation factor IF-1 (83 aa).

The S1-like domain maps to 1–72; that stretch reads MAKEESIEMQ…TRGRIVYREA (72 aa).

This sequence belongs to the IF-1 family. Component of the 30S ribosomal translation pre-initiation complex which assembles on the 30S ribosome in the order IF-2 and IF-3, IF-1 and N-formylmethionyl-tRNA(fMet); mRNA recruitment can occur at any time during PIC assembly.

Its subcellular location is the cytoplasm. Its function is as follows. One of the essential components for the initiation of protein synthesis. Stabilizes the binding of IF-2 and IF-3 on the 30S subunit to which N-formylmethionyl-tRNA(fMet) subsequently binds. Helps modulate mRNA selection, yielding the 30S pre-initiation complex (PIC). Upon addition of the 50S ribosomal subunit IF-1, IF-2 and IF-3 are released leaving the mature 70S translation initiation complex. This chain is Translation initiation factor IF-1, found in Coxiella burnetii (strain Dugway 5J108-111).